The primary structure comprises 545 residues: Acetamidase (545 aa).

Residues K130 and S205 each act as charge relay system in the active site. The Acyl-ester intermediate role is filled by S229.

Belongs to the amidase family.

The catalysed reaction is a monocarboxylic acid amide + H2O = a monocarboxylate + NH4(+). The enzyme catalyses acetamide + H2O = acetate + NH4(+). Allows acetamide to be used as a sole carbon or nitrogen source. The polypeptide is Acetamidase (amdS) (Aspergillus oryzae (strain ATCC 42149 / RIB 40) (Yellow koji mold)).